A 362-amino-acid chain; its full sequence is G-protein coupled receptor homolog US27 (362 aa).

The Virion surface segment spans residues Met1–Arg34. N-linked (GlcNAc...) asparagine; by host glycosylation is found at Asn7, Asn15, Asn18, and Asn22. Residues Leu35–Tyr58 traverse the membrane as a helical segment. Over Arg59–Asp67 the chain is Intravirion. The chain crosses the membrane as a helical span at residues Thr68 to Tyr90. At Ala91–Ser104 the chain is on the virion surface side. The chain crosses the membrane as a helical span at residues Gly105–Met126. Residues Asp127–Thr148 are Intravirion-facing. The chain crosses the membrane as a helical span at residues Cys149 to Leu167. Residues Met168–Asn193 are Virion surface-facing. The helical transmembrane segment at Thr194–Asn213 threads the bilayer. Topologically, residues Arg214–Val233 are intravirion. The helical transmembrane segment at Leu234–Ile257 threads the bilayer. The Virion surface segment spans residues Arg258–Phe274. A helical membrane pass occupies residues Cys275–Gly298. At Thr299–Leu362 the chain is on the intravirion side. A disordered region spans residues Thr341 to Leu362.

This sequence belongs to the G-protein coupled receptor 1 family. In terms of assembly, heterodimer with US28. Interacts with host Gi alpha-1 subunit GNAI1; this interaction does not lead to the catalytic activation of Gi complex.

The protein localises to the virion. It is found in the host cell membrane. Interacts with the host Gi complex without activating it, thereby probably interfering with the chemokine-Gi signaling. May also function as a G protein sink to sequester G protein from the cell surface via internalization. Plays an important role in spread of HCMV via the extracellular route. This is G-protein coupled receptor homolog US27 (US27) from Homo sapiens (Human).